A 119-amino-acid polypeptide reads, in one-letter code: C-X-C motif chemokine 17 (119 aa).

The signal sequence occupies residues Met1–Ser21. Cystine bridges form between Cys75–Cys103 and Cys77–Cys110. The tract at residues Lys81–Ser100 is disordered. Residues Gly82 to Ser100 show a composition bias toward basic residues.

It belongs to the intercrine alpha (chemokine CxC) family. In terms of processing, likely to undergo an endoproteolytic process to form a four-cysteine-containing mature peptide with a canonical CXC chemokine scaffold after secretion. As to expression, detected in trachea, stomach, lung and skeletal muscle. Detected in intestine and in normal and asthmatic lung (at protein level). Breast tumors showed 3- to 24-fold up-regulation.

It is found in the secreted. Functionally, chemokine that acts as a chemoattractant for monocytes, macrophages and dendritic cells. Plays a role in angiogenesis and possibly in the development of tumors. Acts as an anti-inflammatory in the stomach. May play a role in the innate defense against infections. Activates the C-X-C chemokine receptor GPR35 to induce a rapid and transient rise in the level of intracellular calcium ions. Its function is as follows. Seems to exhibit much higher chemoattractant potency on monocytes and macrophages than 6-Cys CXCL17. This is C-X-C motif chemokine 17 (CXCL17) from Homo sapiens (Human).